The sequence spans 454 residues: Ornithine aminotransferase (454 aa).

Pyridoxal 5'-phosphate contacts are provided by G124, T125, and Q267. K293 bears the N6-(pyridoxal phosphate)lysine mark. T321 provides a ligand contact to pyridoxal 5'-phosphate.

It belongs to the class-III pyridoxal-phosphate-dependent aminotransferase family. Homotetramer; dimer of dimers. Pyridoxal 5'-phosphate is required as a cofactor.

It carries out the reaction L-ornithine + 2-oxoglutarate = L-glutamate 5-semialdehyde + L-glutamate. The enzyme catalyses L-lysine + 2-oxoglutarate = (S)-2-amino-6-oxohexanoate + L-glutamate. In terms of biological role, catalyzes the conversion of L-ornithine and 2-oxoglutarate to L-glutamate semialdehyde and L-glutamate. L-ornithine is the best substrate, but the enzyme also shows good activity toward L-lysine, and low activity toward D-ornithine, D-lysine, 5-aminovalerate, 6-aminohexanoate and GABA. The enzyme activity is specific for 2-oxoglutarate. This Pyrococcus horikoshii (strain ATCC 700860 / DSM 12428 / JCM 9974 / NBRC 100139 / OT-3) protein is Ornithine aminotransferase.